Reading from the N-terminus, the 369-residue chain is Choline kinase B2 (369 aa).

Belongs to the choline/ethanolamine kinase family. Mg(2+) is required as a cofactor.

The enzyme catalyses choline + ATP = phosphocholine + ADP + H(+). It participates in phospholipid metabolism; phosphatidylcholine biosynthesis; phosphocholine from choline: step 1/1. Functionally, catalyzes the first step in phosphatidylcholine biosynthesis. Phosphorylates choline. The polypeptide is Choline kinase B2 (ckb-2) (Caenorhabditis elegans).